A 147-amino-acid polypeptide reads, in one-letter code: Cyanate hydratase (147 aa).

Active-site residues include Arg-88, Glu-91, and Ser-114.

This sequence belongs to the cyanase family.

The enzyme catalyses cyanate + hydrogencarbonate + 3 H(+) = NH4(+) + 2 CO2. Catalyzes the reaction of cyanate with bicarbonate to produce ammonia and carbon dioxide. The chain is Cyanate hydratase from Cupriavidus necator (strain ATCC 17699 / DSM 428 / KCTC 22496 / NCIMB 10442 / H16 / Stanier 337) (Ralstonia eutropha).